The sequence spans 370 residues: Cytochrome b (370 aa).

Transmembrane regions (helical) follow at residues 25 to 45, 69 to 90, 105 to 125, and 170 to 190; these read FGSM…FLAV, WMMQ…YIHI, WLSG…GYVL, and FFAL…LHIL. Heme b-binding residues include His-75 and His-89. The heme b site is built by His-174 and His-188. His-193 is a binding site for a ubiquinone. The next 4 helical transmembrane spans lie at 218 to 238, 280 to 300, 312 to 332, and 339 to 358; these read YKDM…VSFF, LGGA…PFTH, LMQL…WTAT, and FTTI…ISNP.

This sequence belongs to the cytochrome b family. The cytochrome bc1 complex contains 3 respiratory subunits (MT-CYB, CYC1 and UQCRFS1), 2 core proteins (UQCRC1 and UQCRC2) and probably 6 low-molecular weight proteins. Heme b is required as a cofactor.

The protein resides in the mitochondrion inner membrane. Functionally, component of the ubiquinol-cytochrome c reductase complex (complex III or cytochrome b-c1 complex) that is part of the mitochondrial respiratory chain. The b-c1 complex mediates electron transfer from ubiquinol to cytochrome c. Contributes to the generation of a proton gradient across the mitochondrial membrane that is then used for ATP synthesis. The sequence is that of Cytochrome b (MT-CYB) from Chilabothrus strigilatus strigilatus (New Providence boa constrictor).